The chain runs to 126 residues: Ribulose bisphosphate carboxylase small subunit, chloroplastic 1 (126 aa).

Belongs to the RuBisCO small chain family. Heterohexadecamer of 8 large and 8 small subunits.

It is found in the plastid. The protein localises to the chloroplast. RuBisCO catalyzes two reactions: the carboxylation of D-ribulose 1,5-bisphosphate, the primary event in carbon dioxide fixation, as well as the oxidative fragmentation of the pentose substrate. Both reactions occur simultaneously and in competition at the same active site. Although the small subunit is not catalytic it is essential for maximal activity. In Acetabularia peniculus (Green alga), this protein is Ribulose bisphosphate carboxylase small subunit, chloroplastic 1.